The chain runs to 913 residues: Epithelial discoidin domain-containing receptor 1 (913 aa).

The first 18 residues, 1–18 (MGPEALSSLLLLLLVASG), serve as a signal peptide directing secretion. Topologically, residues 21–417 (DMKGHFDPAK…VAKAEGSPTA (397 aa)) are extracellular. Positions 31–185 (CRYALGMQDR…VCLRVELYGC (155 aa)) constitute an F5/8 type C domain. Intrachain disulfides connect Cys-31–Cys-185 and Cys-74–Cys-177. A DS-like domain region spans residues 192 to 367 (LSYTAPVGQT…LFSEISFISD (176 aa)). Residues Asn-211, Gln-230, Asp-233, Val-235, Tyr-253, and Tyr-255 each contribute to the Ca(2+) site. Residue Asn-211 is glycosylated (N-linked (GlcNAc...) asparagine). N-linked (GlcNAc...) asparagine glycosylation occurs at Asn-260. A disulfide bridge links Cys-303 with Cys-348. Residues Ser-360 and Glu-361 each contribute to the Ca(2+) site. N-linked (GlcNAc...) asparagine glycosylation is found at Asn-370 and Asn-394. The helical transmembrane segment at 418 to 438 (ILIGCLVAIILLLLLIIALML) threads the bilayer. The Cytoplasmic portion of the chain corresponds to 439–913 (WRLHWRRLLS…FLAEDALNTV (475 aa)). The interval 470–499 (ILINNRPGPREPPPYQEPRPRGNPPHSAPC) is disordered. The segment covering 479–496 (REPPPYQEPRPRGNPPHS) has biased composition (pro residues). A PPxY motif motif is present at residues 481–484 (PPPY). A phosphotyrosine; by autocatalysis mark is found at Tyr-484, Tyr-513, and Tyr-520. Positions 610 to 905 (LRFKEKLGEG…PPFSQLHRFL (296 aa)) constitute a Protein kinase domain. 616–624 (LGEGQFGEV) is a binding site for ATP. Phosphoserine is present on Ser-631. Lys-655 provides a ligand contact to ATP. Tyr-740 carries the post-translational modification Phosphotyrosine; by autocatalysis. Asp-766 serves as the catalytic Proton acceptor. A phosphotyrosine; by autocatalysis mark is found at Tyr-792, Tyr-796, and Tyr-797.

This sequence belongs to the protein kinase superfamily. Tyr protein kinase family. Insulin receptor subfamily. In terms of assembly, homodimer. Interacts (via PPxY motif) with WWC1 (via WW domains) in a collagen-regulated manner. Forms a tripartite complex with WWC1 and PRKCZ, but predominantly in the absence of collagen. Interacts (tyrosine phosphorylated) with SHC1. Interacts with SRC. Interacts with MYH9. Interacts with CDH1. Interacts with PTPN11. Interacts with NCK2. Post-translationally, autophosphorylated in response to fibrillar collagen binding. In terms of processing, glycosylation of Asn-211, but apparently not of Asn-260 or Asn-394, prevents autophosphorylation from occurring in the absence of collagen. As to expression, detected in T-47D, MDA-MB-175 and HBL-100 breast carcinoma cells, A-431 epidermoid carcinoma cells, SW48 and SNU-C2B colon carcinoma cells and Hs 294T melanoma cells (at protein level). Expressed at low levels in most adult tissues and is highest in the brain, lung, placenta and kidney. Lower levels of expression are detected in melanocytes, heart, liver, skeletal muscle and pancreas. Abundant in breast carcinoma cell lines. In the colonic mucosa, expressed in epithelia but not in the connective tissue of the lamina propria. In the thyroid gland, expressed in the epithelium of the thyroid follicles. In pancreas, expressed in the islets of Langerhans cells, but not in the surrounding epithelial cells of the exocrine pancreas. In kidney, expressed in the epithelia of the distal tubules. Not expressed in connective tissue, endothelial cells, adipose tissue, muscle cells or cells of hematopoietic origin.

It is found in the cell membrane. The protein localises to the secreted. It carries out the reaction L-tyrosyl-[protein] + ATP = O-phospho-L-tyrosyl-[protein] + ADP + H(+). With respect to regulation, inhibited by the multi-targeted cancer drugs imatinib and ponatinib. Tyrosine kinase that functions as a cell surface receptor for fibrillar collagen and regulates cell attachment to the extracellular matrix, remodeling of the extracellular matrix, cell migration, differentiation, survival and cell proliferation. Collagen binding triggers a signaling pathway that involves SRC and leads to the activation of MAP kinases. Regulates remodeling of the extracellular matrix by up-regulation of the matrix metalloproteinases MMP2, MMP7 and MMP9, and thereby facilitates cell migration and wound healing. Required for normal blastocyst implantation during pregnancy, for normal mammary gland differentiation and normal lactation. Required for normal ear morphology and normal hearing. Promotes smooth muscle cell migration, and thereby contributes to arterial wound healing. Also plays a role in tumor cell invasion. Phosphorylates PTPN11. The sequence is that of Epithelial discoidin domain-containing receptor 1 (DDR1) from Homo sapiens (Human).